We begin with the raw amino-acid sequence, 924 residues long: TBC1 domain family member 2A (924 aa).

Positions 1 to 38 (MEDTPERTPSSESIQPPGLAREPEVTSPGDSEGCARPL) are disordered. Positions 1–167 (MEDTPERTPS…TENGPTLHLK (167 aa)) are interaction with CADH1. In terms of domain architecture, PH spans 42–140 (PKKLCGYLSK…WLQQLQMKRW (99 aa)). The segment at 228 to 296 (KQAQATAHGP…KRQSNTFPFF (69 aa)) is disordered. Over residues 261-270 (IPEKEPEDPP) the composition is skewed to basic and acidic residues. An interaction with RAC1 region spans residues 297 to 435 (SDGLARSRTA…KLTEDLAQPQ (139 aa)). Coiled-coil stretches lie at residues 303–332 (SRTA…ELVI), 361–418 (LELV…AKQQ), and 444–477 (FLSQ…QVTK). Residues 621–813 (GVPREHRPRV…RVWDAFLYEG (193 aa)) form the Rab-GAP TBC domain. Positions 871–906 (MKQLRQLRAAHRERLEAELRELELLKAEYLERRASR) form a coiled coil. Residue serine 916 is modified to Phosphoserine.

As to quaternary structure, interacts with activated RAC1 and CDH1.

It is found in the cytoplasm. The protein resides in the cytoplasmic vesicle. Its subcellular location is the cell junction. Acts as a GTPase-activating protein for RAB7A. Signal effector acting as a linker between RAC1 and RAB7A, leading to RAB7A inactivation and subsequent inhibition of cadherin degradation and reduced cell-cell adhesion. The chain is TBC1 domain family member 2A (Tbc1d2) from Rattus norvegicus (Rat).